We begin with the raw amino-acid sequence, 335 residues long: Twinfilin (335 aa).

ADF-H domains are found at residues 4–140 and 176–316; these read SSGI…QHKL and GISF…NELH. The interval 307–335 is disordered; sequence SEESIINELHPPKVEEKKAFSKPSRPGRK. Residues 316–325 show a composition bias toward basic and acidic residues; it reads HPPKVEEKKA.

This sequence belongs to the actin-binding proteins ADF family. Twinfilin subfamily. Interacts with G-actin; ADP-actin form.

It is found in the cytoplasm. It localises to the cytoskeleton. The protein localises to the cell cortex. In terms of biological role, actin-binding protein involved in motile and morphological processes. Inhibits actin polymerization, likely by sequestering G-actin. The protein is Twinfilin (twfA) of Dictyostelium discoideum (Social amoeba).